Reading from the N-terminus, the 286-residue chain is Flagellar filament 31.3 kDa core protein (286 aa).

This sequence belongs to the bacterial flagellin family. The core of the flagellum consists of several antigenically related polypeptides. Post-translationally, glycosylated. Glycosylation is not essential for motility.

It localises to the periplasmic flagellum. The protein resides in the periplasm. Component of the core of the flagella. The sequence is that of Flagellar filament 31.3 kDa core protein (flaB2) from Treponema maltophilum.